The sequence spans 324 residues: Putative exosome complex exonuclease RRP42 (324 aa).

It belongs to the RNase PH family. Component of the RNA exosome complex.

Its subcellular location is the nucleus. It localises to the nucleolus. The protein resides in the cytoplasm. Functionally, non-catalytic component of the RNA exosome complex which has 3'-&gt;5' exoribonuclease activity and participates in a multitude of cellular RNA processing and degradation events. The sequence is that of Putative exosome complex exonuclease RRP42 (exosc7) from Dictyostelium discoideum (Social amoeba).